Consider the following 124-residue polypeptide: Protein YobA (124 aa).

Positions 1-26 are cleaved as a signal peptide; sequence MASTARSLRYALAILTTSLVTPSVWA. Positions 27 and 113 each coordinate Cu cation.

Belongs to the CopC family.

The protein resides in the periplasm. The polypeptide is Protein YobA (yobA) (Escherichia coli O6:H1 (strain CFT073 / ATCC 700928 / UPEC)).